We begin with the raw amino-acid sequence, 452 residues long: Cobyrinate a,c-diamide synthase (452 aa).

Positions R248–A441 constitute a GATase cobBQ-type domain. The Nucleophile role is filled by C330.

The protein belongs to the CobB/CbiA family. It depends on Mg(2+) as a cofactor.

The catalysed reaction is cob(II)yrinate + 2 L-glutamine + 2 ATP + 2 H2O = cob(II)yrinate a,c diamide + 2 L-glutamate + 2 ADP + 2 phosphate + 2 H(+). It participates in cofactor biosynthesis; adenosylcobalamin biosynthesis; cob(II)yrinate a,c-diamide from sirohydrochlorin (anaerobic route): step 10/10. Catalyzes the ATP-dependent amidation of the two carboxylate groups at positions a and c of cobyrinate, using either L-glutamine or ammonia as the nitrogen source. This is Cobyrinate a,c-diamide synthase from Listeria monocytogenes serovar 1/2a (strain ATCC BAA-679 / EGD-e).